The sequence spans 327 residues: HTH-type transcriptional regulator EbgR (327 aa).

One can recognise an HTH lacI-type domain in the interval 1 to 57 (MATLKDIAIEAGVSLATVSRVLNDDPTLNVKEETKHRILEIAEKLEYKTSSARKLQT). The segment at residues 4 to 23 (LKDIAIEAGVSLATVSRVLN) is a DNA-binding region (H-T-H motif).

In terms of biological role, repressor for beta galactosidase alpha and beta subunits (ebgA and ebgC). Binds lactose as an inducer. This is HTH-type transcriptional regulator EbgR (ebgR) from Escherichia coli (strain K12).